A 107-amino-acid chain; its full sequence is Large ribosomal subunit protein uL24 (107 aa).

The protein belongs to the universal ribosomal protein uL24 family. As to quaternary structure, part of the 50S ribosomal subunit.

Functionally, one of two assembly initiator proteins, it binds directly to the 5'-end of the 23S rRNA, where it nucleates assembly of the 50S subunit. Its function is as follows. One of the proteins that surrounds the polypeptide exit tunnel on the outside of the subunit. The sequence is that of Large ribosomal subunit protein uL24 from Neisseria meningitidis serogroup C (strain 053442).